The chain runs to 199 residues: UPF0301 protein Anae109_0457 (199 aa).

This sequence belongs to the UPF0301 (AlgH) family.

The polypeptide is UPF0301 protein Anae109_0457 (Anaeromyxobacter sp. (strain Fw109-5)).